The following is a 987-amino-acid chain: SNF2 domain-containing protein ENL1 (987 aa).

Disordered regions lie at residues Met-1–Gly-172 and Phe-224–Ala-245. Composition is skewed to pro residues over residues Thr-18 to Ala-27 and Asn-51 to Pro-71. The span at Asp-99–Thr-110 shows a compositional bias: basic and acidic residues. Residues Pro-141–Phe-156 show a composition bias toward polar residues. Positions Asp-226–Ala-237 are enriched in acidic residues. Positions Trp-292–Glu-466 constitute a Helicase ATP-binding domain. Asp-305–Thr-312 contributes to the ATP binding site. A DEAH box motif is present at residues Asp-417–His-420. The region spanning Ser-645 to Gln-801 is the Helicase C-terminal domain.

This sequence belongs to the SNF2/RAD54 helicase family. As to expression, expressed in ovaries, roots, shoots and leaves.

The protein localises to the cytoplasm. Its subcellular location is the chromosome. DNA helicase that acts as an essential component of the spindle assembly checkpoint. Plays an indispensable role in the development of seed endosperm. Is required to secure sister chromosome separation during endosperm syncytial mitosis, which involves extremely rapid free nuclear cycles. This chain is SNF2 domain-containing protein ENL1, found in Oryza sativa subsp. japonica (Rice).